We begin with the raw amino-acid sequence, 443 residues long: MVLITRYLPSVTDNNQPALEGQSKDQIVDTVITSTTVGIINQLTMLVAHSNSIFTALANDANLVTQRIEKLGSRIRPLIQSIPSIEDYHRNTSIDTMNSKPRAEFHADNSERNQHFTHASIPASINTVYEKCKPPPNLQLLDPYMDDGQKSLKLYTNPDFFMDEWVAEQQKLHEEARQRKRERREARLKKKGEKNEVEVKKVKSVTKVRYDPVTGEKITINIESPHTSSPQIQHQSNNTATPQHTTQHFGTNQYQAPPPPPLSQSSPSQQHSPINSYTPPPPPLNTSTPSPSSSFQGRPPSTGFNTPPPPMSNNNNMPPPPPMQQNGGAANNRLSVHNSAPIVAAPAPPPPPPPPSAPAPPPPPMAKAGGGASDIKPKASGARSDLLSSIMQGMALKPAEERKVAEAPKKEEALNVADILARRIAWAGDSDSSEDESDDSDWD.

The tract at residues 1–96 (MVLITRYLPS…DYHRNTSIDT (96 aa)) is interaction with brk1 and abiA. A coiled-coil region spans residues 166-201 (VAEQQKLHEEARQRKRERREARLKKKGEKNEVEVKK). 2 disordered regions span residues 176–197 (ARQR…KNEV) and 220–386 (INIE…RSDL). Positions 178–192 (QRKRERREARLKKKG) are enriched in basic residues. Polar residues predominate over residues 221–252 (NIESPHTSSPQIQHQSNNTATPQHTTQHFGTN). Low complexity-rich tracts occupy residues 263–277 (SQSS…INSY) and 285–305 (NTST…TGFN). Positions 306–323 (TPPPPMSNNNNMPPPPPM) are enriched in pro residues. Polar residues predominate over residues 324 to 338 (QQNGGAANNRLSVHN). Positions 346–365 (PAPPPPPPPPSAPAPPPPPM) are enriched in pro residues. The region spanning 382–399 (ARSDLLSSIMQGMALKPA) is the WH2 domain.

It belongs to the SCAR/WAVE family. In terms of assembly, part of a Scar/WAVE complex containing brk1, scrA, abiA, pirA and napA. Interacts with brk1 and abiA.

It is found in the cytoplasm. The protein resides in the cytoskeleton. Its subcellular location is the cell projection. The protein localises to the pseudopodium tip. It localises to the filopodium tip. In terms of biological role, involved in regulation of actin and microtubule organization. Regulates phagocytosis and macropinocytosis. The sequence is that of Protein SCAR (scrA) from Dictyostelium discoideum (Social amoeba).